Consider the following 167-residue polypeptide: SsrA-binding protein (167 aa).

Positions 139–167 are disordered; the sequence is QAHDKRHAEKEREWQRDKQRIMRAHNRNA. The segment covering 144–158 has biased composition (basic and acidic residues); sequence RHAEKEREWQRDKQR.

Belongs to the SmpB family.

It is found in the cytoplasm. Functionally, required for rescue of stalled ribosomes mediated by trans-translation. Binds to transfer-messenger RNA (tmRNA), required for stable association of tmRNA with ribosomes. tmRNA and SmpB together mimic tRNA shape, replacing the anticodon stem-loop with SmpB. tmRNA is encoded by the ssrA gene; the 2 termini fold to resemble tRNA(Ala) and it encodes a 'tag peptide', a short internal open reading frame. During trans-translation Ala-aminoacylated tmRNA acts like a tRNA, entering the A-site of stalled ribosomes, displacing the stalled mRNA. The ribosome then switches to translate the ORF on the tmRNA; the nascent peptide is terminated with the 'tag peptide' encoded by the tmRNA and targeted for degradation. The ribosome is freed to recommence translation, which seems to be the essential function of trans-translation. The protein is SsrA-binding protein of Xylella fastidiosa (strain M23).